The following is a 290-amino-acid chain: ATP synthase gamma chain (290 aa).

The protein belongs to the ATPase gamma chain family. In terms of assembly, F-type ATPases have 2 components, CF(1) - the catalytic core - and CF(0) - the membrane proton channel. CF(1) has five subunits: alpha(3), beta(3), gamma(1), delta(1), epsilon(1). CF(0) has three main subunits: a, b and c.

The protein resides in the cell membrane. Produces ATP from ADP in the presence of a proton gradient across the membrane. The gamma chain is believed to be important in regulating ATPase activity and the flow of protons through the CF(0) complex. In Chloroflexus aurantiacus (strain ATCC 29366 / DSM 635 / J-10-fl), this protein is ATP synthase gamma chain.